Consider the following 105-residue polypeptide: Secreted RxLR effector protein 158 (105 aa).

An N-terminal signal peptide occupies residues 1–22; it reads MRGAHYVAIVLLVAAGGQTAAG. A RxLR-dEER motif is present at residues 50–71; it reads RALQASRNPKDDLMFSAGDEER.

It belongs to the RxLR effector family.

Its subcellular location is the secreted. The protein resides in the host nucleus. It localises to the host cytoplasm. In terms of biological role, secreted effector that partially suppresses the host cell death induced by cell death-inducing proteins. This chain is Secreted RxLR effector protein 158, found in Plasmopara viticola (Downy mildew of grapevine).